Consider the following 142-residue polypeptide: Hemoglobin subunit alpha-A (142 aa).

Residues 2–142 (VLSGSDKTNV…VGNVLTAKYR (141 aa)) enclose the Globin domain. Histidine 59 is a binding site for O2. Histidine 88 contributes to the heme b binding site.

This sequence belongs to the globin family. Heterotetramer of two alpha chains and two beta chains. In terms of tissue distribution, red blood cells.

Functionally, involved in oxygen transport from the lung to the various peripheral tissues. The sequence is that of Hemoglobin subunit alpha-A (HBAA) from Ara ararauna (Blue-and-yellow macaw).